Consider the following 862-residue polypeptide: DNA gyrase subunit A (862 aa).

In terms of domain architecture, Topo IIA-type catalytic spans 38–501; it reads LPDARDGLKP…DYDDIDVEDL (464 aa). Y126 functions as the O-(5'-phospho-DNA)-tyrosine intermediate in the catalytic mechanism. The GyrA-box signature appears at 528–534; the sequence is QKRGGKG. The segment at 843–862 is disordered; it reads KEESDDDDIVADDTQEQDME. Over residues 845 to 862 the composition is skewed to acidic residues; sequence ESDDDDIVADDTQEQDME.

The protein belongs to the type II topoisomerase GyrA/ParC subunit family. As to quaternary structure, heterotetramer, composed of two GyrA and two GyrB chains. In the heterotetramer, GyrA contains the active site tyrosine that forms a transient covalent intermediate with DNA, while GyrB binds cofactors and catalyzes ATP hydrolysis.

The protein localises to the cytoplasm. It carries out the reaction ATP-dependent breakage, passage and rejoining of double-stranded DNA.. Its function is as follows. A type II topoisomerase that negatively supercoils closed circular double-stranded (ds) DNA in an ATP-dependent manner to modulate DNA topology and maintain chromosomes in an underwound state. Negative supercoiling favors strand separation, and DNA replication, transcription, recombination and repair, all of which involve strand separation. Also able to catalyze the interconversion of other topological isomers of dsDNA rings, including catenanes and knotted rings. Type II topoisomerases break and join 2 DNA strands simultaneously in an ATP-dependent manner. The chain is DNA gyrase subunit A from Campylobacter fetus.